A 396-amino-acid polypeptide reads, in one-letter code: Decapping nuclease RAI1 (396 aa).

Position 107 to 109 (107 to 109 (YRG)) interacts with substrate. E179 contacts a divalent metal cation. Residue E228 participates in substrate binding. A divalent metal cation-binding residues include D230, E249, and L250. 2 residues coordinate substrate: K251 and Q275.

It belongs to the DXO/Dom3Z family. In terms of assembly, interacts with RAT1; the interaction is direct, stabilizes RAT1 protein structure and stimulates its exoribonuclease activity. The interaction also stimulates RAI1 pyrophosphohydrolase activity, probably by recruiting it to mRNA substrates. Requires a divalent metal cation as cofactor.

The protein localises to the nucleus. The catalysed reaction is a 5'-end NAD(+)-phospho-ribonucleoside in mRNA + H2O = a 5'-end phospho-ribonucleoside in mRNA + NAD(+) + H(+). It carries out the reaction a 5'-end (N(7)-methyl 5'-triphosphoguanosine)-ribonucleoside-ribonucleotide in mRNA + H2O = a (N(7)-methyl 5'-triphosphoguanosine)-nucleoside + a 5'-end phospho-ribonucleoside in mRNA + H(+). It catalyses the reaction a 5'-end triphospho-ribonucleoside in mRNA + H2O = a 5'-end phospho-ribonucleoside in mRNA + diphosphate + H(+). In terms of biological role, decapping enzyme for NAD-capped RNAs: specifically hydrolyzes the nicotinamide adenine dinucleotide (NAD) cap from a subset of RNAs by removing the entire NAD moiety from the 5'-end of an NAD-capped RNA. The NAD-cap is present at the 5'-end of some RNAs and snoRNAs. In contrast to the canonical 5'-end N7 methylguanosine (m7G) cap, the NAD cap promotes mRNA decay. Also acts as a non-canonical decapping enzyme that removes the entire cap structure of m7G capped or incompletely capped RNAs. Has decapping activity toward incomplete 5'-end m7G cap mRNAs such as unmethylated 5'-end-capped RNA (cap0), while it has no activity toward 2'-O-ribose methylated m7G cap (cap1). Also possesses RNA 5'-pyrophosphohydrolase activity by hydrolyzing the 5'-end triphosphate to release pyrophosphates. Stimulates exoribonuclease activity of Rat1, allowing it to degrade RNAs with stable secondary structure more effectively. The chain is Decapping nuclease RAI1 from Scheffersomyces stipitis (strain ATCC 58785 / CBS 6054 / NBRC 10063 / NRRL Y-11545) (Yeast).